The sequence spans 229 residues: Putative N-acetylmannosamine-6-phosphate 2-epimerase (229 aa).

It belongs to the NanE family.

It catalyses the reaction an N-acyl-D-glucosamine 6-phosphate = an N-acyl-D-mannosamine 6-phosphate. The protein operates within amino-sugar metabolism; N-acetylneuraminate degradation; D-fructose 6-phosphate from N-acetylneuraminate: step 3/5. Converts N-acetylmannosamine-6-phosphate (ManNAc-6-P) to N-acetylglucosamine-6-phosphate (GlcNAc-6-P). In Escherichia coli O127:H6 (strain E2348/69 / EPEC), this protein is Putative N-acetylmannosamine-6-phosphate 2-epimerase.